The primary structure comprises 197 residues: Phosphoheptose isomerase (197 aa).

Residues methionine 36–glutamate 197 enclose the SIS domain. Asparagine 51–glycine 53 is a substrate binding site. Zn(2+) contacts are provided by histidine 60 and glutamate 64. Residues glutamate 64, asparagine 93 to aspartate 94, serine 119 to serine 121, serine 124, and glutamine 174 contribute to the substrate site. Zn(2+) is bound by residues glutamine 174 and histidine 182.

This sequence belongs to the SIS family. GmhA subfamily. In terms of assembly, homotetramer. Zn(2+) is required as a cofactor.

It localises to the cytoplasm. The enzyme catalyses 2 D-sedoheptulose 7-phosphate = D-glycero-alpha-D-manno-heptose 7-phosphate + D-glycero-beta-D-manno-heptose 7-phosphate. Its pathway is carbohydrate biosynthesis; D-glycero-D-manno-heptose 7-phosphate biosynthesis; D-glycero-alpha-D-manno-heptose 7-phosphate and D-glycero-beta-D-manno-heptose 7-phosphate from sedoheptulose 7-phosphate: step 1/1. In terms of biological role, catalyzes the isomerization of sedoheptulose 7-phosphate in D-glycero-D-manno-heptose 7-phosphate. The protein is Phosphoheptose isomerase of Azoarcus sp. (strain BH72).